The primary structure comprises 162 residues: Peptide deformylase-like (162 aa).

Belongs to the polypeptide deformylase family.

This is Peptide deformylase-like from Staphylococcus epidermidis (strain ATCC 35984 / DSM 28319 / BCRC 17069 / CCUG 31568 / BM 3577 / RP62A).